The chain runs to 184 residues: Adenylate kinase 2 (184 aa).

10–15 (GSGKST) is an ATP binding site. The NMP stretch occupies residues 30–59 (STGEILREAISHLSELGRHAQPYMIKGELV). Residues T31, R36, 57–59 (ELV), 85–88 (GYPR), and Q92 contribute to the AMP site. Positions 126–132 (GRSLPDD) are LID. Position 127 (R127) interacts with ATP. An AMP-binding site is contributed by R140. Q168 serves as a coordination point for ATP.

Belongs to the adenylate kinase family. As to quaternary structure, monomer.

The protein localises to the cytoplasm. The enzyme catalyses AMP + ATP = 2 ADP. The protein operates within purine metabolism; AMP biosynthesis via salvage pathway; AMP from ADP: step 1/1. Functionally, catalyzes the reversible transfer of the terminal phosphate group between ATP and AMP. Plays an important role in cellular energy homeostasis and in adenine nucleotide metabolism. This chain is Adenylate kinase 2, found in Nostoc sp. (strain PCC 7120 / SAG 25.82 / UTEX 2576).